Reading from the N-terminus, the 493-residue chain is Glutamyl-tRNA(Gln) amidotransferase subunit A (493 aa).

Active-site charge relay system residues include Lys79 and Ser159. Ser183 (acyl-ester intermediate) is an active-site residue.

This sequence belongs to the amidase family. GatA subfamily. As to quaternary structure, heterotrimer of A, B and C subunits.

It catalyses the reaction L-glutamyl-tRNA(Gln) + L-glutamine + ATP + H2O = L-glutaminyl-tRNA(Gln) + L-glutamate + ADP + phosphate + H(+). In terms of biological role, allows the formation of correctly charged Gln-tRNA(Gln) through the transamidation of misacylated Glu-tRNA(Gln) in organisms which lack glutaminyl-tRNA synthetase. The reaction takes place in the presence of glutamine and ATP through an activated gamma-phospho-Glu-tRNA(Gln). The protein is Glutamyl-tRNA(Gln) amidotransferase subunit A of Rhizobium leguminosarum bv. trifolii (strain WSM2304).